We begin with the raw amino-acid sequence, 300 residues long: Ribosomal RNA small subunit methyltransferase H (300 aa).

Residues 36-38 (GGH), D55, L89, D103, and Q110 contribute to the S-adenosyl-L-methionine site.

This sequence belongs to the methyltransferase superfamily. RsmH family.

The protein localises to the cytoplasm. It carries out the reaction cytidine(1402) in 16S rRNA + S-adenosyl-L-methionine = N(4)-methylcytidine(1402) in 16S rRNA + S-adenosyl-L-homocysteine + H(+). Its function is as follows. Specifically methylates the N4 position of cytidine in position 1402 (C1402) of 16S rRNA. The sequence is that of Ribosomal RNA small subunit methyltransferase H from Thermotoga neapolitana (strain ATCC 49049 / DSM 4359 / NBRC 107923 / NS-E).